A 756-amino-acid polypeptide reads, in one-letter code: Cartilage oligomeric matrix protein (756 aa).

The first 20 residues, 1 to 20 (MVLAAARVLLLTLAALGASG), serve as a signal peptide directing secretion. Residues 22-85 (GQMPLGGDLG…PARTPKLTVR (64 aa)) are COMP N-terminal. Residues 86-125 (PLSQCSPGFCFPGVACTETANGARCGPCPEGFTGNGSHCA) form the EGF-like 1 domain. 10 cysteine pairs are disulfide-bonded: Cys90–Cys101, Cys95–Cys110, Cys113–Cys124, Cys130–Cys141, Cys135–Cys150, Cys183–Cys196, Cys190–Cys205, Cys228–Cys242, Cys236–Cys252, and Cys254–Cys265. Asn120 is a glycosylation site (N-linked (GlcNAc...) asparagine). The region spanning 126–178 (DVNECTAHPCFPRVRCINTSPGFRCEACPPGFSGPTHEGVGLAFAKANKQVCT) is the EGF-like 2; calcium-binding domain. The EGF-like 3; calcium-binding domain maps to 179 to 218 (DINECETGQHNCVPNSVCVNTVGSFQCGPCQPGFVGDQAS). An EGF-like 4 domain is found at 224–266 (PQRFCPDGTPSPCHEKADCVLERDGSRSCVCAVGWAGNGLICG). TSP type-3 repeat units follow at residues 267-299 (RDTD…NSGQ), 300-335 (EDVD…NPDQ), 336-358 (RNTD…NDDQ), 359-394 (KDTD…NSDQ), 395-417 (KDTD…NADQ), 418-455 (RDVD…NSAQ), 456-491 (QDSD…NPGQ), and 492-527 (EDMD…EVTL). Residues 322 to 502 (NEKDNCPLVR…DMDRDGVGDA (181 aa)) form a disordered region. Composition is skewed to basic and acidic residues over residues 333-345 (PDQR…KWGD), 351-369 (RSQK…RGDA), and 415-425 (ADQRDVDHDFV). A Cell attachment site motif is present at residues 366 to 368 (RGD). Over residues 466 to 475 (ACDDDDDNDG) the composition is skewed to acidic residues. The segment at 526-756 (TLTDFRAFQT…DYEAQRLLQA (231 aa)) is mediates cell survival and induction of the IAP family of survival proteins. The TSP C-terminal domain occupies 531 to 745 (RAFQTVVLDP…LRYRCNDTIP (215 aa)). A glycan (N-linked (GlcNAc...) asparagine) is linked at Asn741.

Belongs to the thrombospondin family. As to quaternary structure, pentamer; disulfide-linked. Exists in a more compact conformation in the presence of calcium and shows a more extended conformation in the absence of calcium. Interacts with ITGB3, ITGA5 and FN1. Binding to FN1 requires the presence of divalent cations (Ca(2+), Mg(2+) or Mn(2+)). The greatest amount of binding is seen in the presence of Mn(2+). Interacts with MATN1, MATN3, MATN4 and ACAN. Binds heparin, heparan sulfate and chondroitin sulfate. EDTA dimishes significantly its binding to ACAN and abolishes its binding to MATN3, MATN4 and chondroitin sulfate. Interacts with collagen I, II and IX, and interaction with these collagens is dependent on the presence of zinc ions. Interacts with ADAMTS12. Interacts with ITGA7. It depends on Ca(2+) as a cofactor. Proteolytically cleaved by metalloproteases ADAMTS4 and ADAMTS1 with ADAMTS4 showing more potent activity.

The protein resides in the secreted. Its subcellular location is the extracellular space. It is found in the extracellular matrix. Its function is as follows. Plays a role in the structural integrity of cartilage via its interaction with other extracellular matrix proteins such as the collagens and fibronectin. Can mediate the interaction of chondrocytes with the cartilage extracellular matrix through interaction with cell surface integrin receptors. Could play a role in the pathogenesis of osteoarthritis. Potent suppressor of apoptosis in both primary chondrocytes and transformed cells. Suppresses apoptosis by blocking the activation of caspase-3 and by inducing the IAP family of survival proteins (BIRC3, BIRC2, BIRC5 and XIAP). Essential for maintaining a vascular smooth muscle cells (VSMCs) contractile/differentiated phenotype under physiological and pathological stimuli. Maintains this phenotype of VSMCs by interacting with ITGA7. The chain is Cartilage oligomeric matrix protein (COMP) from Bos taurus (Bovine).